Reading from the N-terminus, the 63-residue chain is Small ribosomal subunit protein bS21 (63 aa).

The protein belongs to the bacterial ribosomal protein bS21 family.

This Azobacteroides pseudotrichonymphae genomovar. CFP2 protein is Small ribosomal subunit protein bS21.